The chain runs to 527 residues: Exodeoxyribonuclease 7 large subunit (527 aa).

The interval 499-527 (AGEEGAPPPAAPKKRASRPVVPTKQGSLF) is disordered.

The protein belongs to the XseA family. In terms of assembly, heterooligomer composed of large and small subunits.

The protein resides in the cytoplasm. The catalysed reaction is Exonucleolytic cleavage in either 5'- to 3'- or 3'- to 5'-direction to yield nucleoside 5'-phosphates.. Its function is as follows. Bidirectionally degrades single-stranded DNA into large acid-insoluble oligonucleotides, which are then degraded further into small acid-soluble oligonucleotides. In Sinorhizobium fredii (strain NBRC 101917 / NGR234), this protein is Exodeoxyribonuclease 7 large subunit.